The primary structure comprises 303 residues: MQIKILGCESFGARSLACIVKTGERKILIDPGVALARLRYGLLPHPVEVAAALRVREKILAELEGTTDIVISHYHGDHMPMKAEDPYQLPVEALPDLKGVRFWCKGPGNISGLSARRRKEFFRYLGHSLPASEGISSEGVSFSPAVPHGTRDKGFGTVMMTRVSEEDEVFVHGSDIQLLDREAVMQILAWKPSVVFVSGPPLYLSHHVPEASNEALENALLLAENAGTLILDHHLLRFLEGYRWLKDLAGMVKNTVVCAAEFMGKKPELLDAQRKSLYEEMPVPRGWHEAYEKGEAGVEDYLL.

This sequence belongs to the UPF0282 family.

The chain is UPF0282 protein MM_2966 from Methanosarcina mazei (strain ATCC BAA-159 / DSM 3647 / Goe1 / Go1 / JCM 11833 / OCM 88) (Methanosarcina frisia).